The chain runs to 257 residues: 1-(5-phosphoribosyl)-5-[(5-phosphoribosylamino)methylideneamino] imidazole-4-carboxamide isomerase (257 aa).

Residue Asp-8 is the Proton acceptor of the active site. The active-site Proton donor is the Asp-129.

It belongs to the HisA/HisF family.

The protein localises to the cytoplasm. The enzyme catalyses 1-(5-phospho-beta-D-ribosyl)-5-[(5-phospho-beta-D-ribosylamino)methylideneamino]imidazole-4-carboxamide = 5-[(5-phospho-1-deoxy-D-ribulos-1-ylimino)methylamino]-1-(5-phospho-beta-D-ribosyl)imidazole-4-carboxamide. It functions in the pathway amino-acid biosynthesis; L-histidine biosynthesis; L-histidine from 5-phospho-alpha-D-ribose 1-diphosphate: step 4/9. The polypeptide is 1-(5-phosphoribosyl)-5-[(5-phosphoribosylamino)methylideneamino] imidazole-4-carboxamide isomerase (Rippkaea orientalis (strain PCC 8801 / RF-1) (Cyanothece sp. (strain PCC 8801))).